Reading from the N-terminus, the 376-residue chain is Polycomb group protein FIE1 (376 aa).

WD repeat units follow at residues Asp85 to Thr127, Gly130 to Ile170, Gly176 to Glu216, Val242 to Gly279, Val291 to Thr332, and Gln339 to Ala376.

Belongs to the WD repeat ESC family. As to quaternary structure, interacts with EZ1. Component of the polycomb repressive complex 2 (PRC2), composed of the core PRC2 components EMF2B, EZ1 and CLF. PRC2 methylates 'Lys-27' residues of histone H3 (H3K27me3), leading to transcriptional repression of the affected target gene. Widely expressed.

In terms of biological role, polycomb group (PcG) protein. PcG proteins act by forming multiprotein complexes, which are required to maintain the transcriptionally repressive state of homeotic genes throughout development. PcG proteins are not required to initiate repression, but to maintain it during later stages of development. They act via the methylation of histones, rendering chromatin heritably changed in its expressibility. Involved in the regulation of seed endosperm development, grain filling and seed dormancy. FIE2-containing PcG complex in seed endosperm regulates the expression of various transcription factors by trimethylation on histone H3 'Lys-27' (H3K27me3) of target genes. Involved in the overall expression regulation of a large number of nutrient metabolism genes. Involved in the regulation of seed endosperm development. Involved in the regulation of vegetative development, particularly in stem cell maintenance in the root system, where it maintains the suppression of key differentiation regulators. This is Polycomb group protein FIE1 from Oryza sativa subsp. japonica (Rice).